The chain runs to 226 residues: MAAILELVEIERHFFESHKPLIILDKANFILNRGELVALVAPSGAGKSTLLHIAGLLEKPTAGDVILRGVSCAKRSDNERTAIRRNDIGFVYQFHHLLPEFTALENIIIPQMIAGFKKSIAEDRALKLLTYLRVSHRANHRPSELSGGEQQRVAIARAVANGPSVLLADEPTGNLDPVTSAYVFQALSALVRQSGLSALIATHNYGLAKQMHRRITLKEKKIVELP.

In terms of domain architecture, ABC transporter spans 5–225; it reads LELVEIERHF…TLKEKKIVEL (221 aa). Position 41–48 (41–48) interacts with ATP; that stretch reads APSGAGKS.

The protein belongs to the ABC transporter superfamily. Lipoprotein translocase (TC 3.A.1.125) family. The complex is composed of two ATP-binding proteins (LolD) and two transmembrane proteins (LolC and LolE).

It is found in the cell inner membrane. Part of the ABC transporter complex LolCDE involved in the translocation of mature outer membrane-directed lipoproteins, from the inner membrane to the periplasmic chaperone, LolA. Responsible for the formation of the LolA-lipoprotein complex in an ATP-dependent manner. This is Lipoprotein-releasing system ATP-binding protein LolD from Bartonella quintana (strain Toulouse) (Rochalimaea quintana).